The following is a 342-amino-acid chain: S-adenosylmethionine:tRNA ribosyltransferase-isomerase (342 aa).

The protein belongs to the QueA family. As to quaternary structure, monomer.

Its subcellular location is the cytoplasm. It catalyses the reaction 7-aminomethyl-7-carbaguanosine(34) in tRNA + S-adenosyl-L-methionine = epoxyqueuosine(34) in tRNA + adenine + L-methionine + 2 H(+). It functions in the pathway tRNA modification; tRNA-queuosine biosynthesis. Functionally, transfers and isomerizes the ribose moiety from AdoMet to the 7-aminomethyl group of 7-deazaguanine (preQ1-tRNA) to give epoxyqueuosine (oQ-tRNA). This Novosphingobium aromaticivorans (strain ATCC 700278 / DSM 12444 / CCUG 56034 / CIP 105152 / NBRC 16084 / F199) protein is S-adenosylmethionine:tRNA ribosyltransferase-isomerase.